The following is a 262-amino-acid chain: Phosphatidylglycerol--prolipoprotein diacylglyceryl transferase (262 aa).

The next 4 membrane-spanning stretches (helical) occupy residues 17–37, 57–77, 95–115, and 119–139; these read LAIH…YALG, LIFY…VLFY, GGMS…LFAH, and LGFF…LAAG. R140 lines the a 1,2-diacyl-sn-glycero-3-phospho-(1'-sn-glycerol) pocket. 3 helical membrane passes run 173–193, 200–220, and 227–247; these read PSQL…LWWY, AGQV…LVEF, and FLGL…PMVL.

This sequence belongs to the Lgt family.

The protein resides in the cell inner membrane. It catalyses the reaction L-cysteinyl-[prolipoprotein] + a 1,2-diacyl-sn-glycero-3-phospho-(1'-sn-glycerol) = an S-1,2-diacyl-sn-glyceryl-L-cysteinyl-[prolipoprotein] + sn-glycerol 1-phosphate + H(+). Its pathway is protein modification; lipoprotein biosynthesis (diacylglyceryl transfer). In terms of biological role, catalyzes the transfer of the diacylglyceryl group from phosphatidylglycerol to the sulfhydryl group of the N-terminal cysteine of a prolipoprotein, the first step in the formation of mature lipoproteins. The protein is Phosphatidylglycerol--prolipoprotein diacylglyceryl transferase of Bordetella parapertussis (strain 12822 / ATCC BAA-587 / NCTC 13253).